A 147-amino-acid polypeptide reads, in one-letter code: uncharacterized protein (147 aa).

Helical transmembrane passes span 21–41 (LMLW…IVFV) and 67–87 (ALFG…SIPL).

It localises to the cell membrane. This is an uncharacterized protein from Ureaplasma parvum serovar 3 (strain ATCC 700970).